The following is a 113-amino-acid chain: U11-theraphotoxin-Hhn1h (113 aa).

An N-terminal signal peptide occupies residues 1 to 21 (MNTVRVTFLLVFVLVVSLGQA). Positions 22-74 (DKDENRMEMQEKTEQGKSYLDFAENLLLQKLEELEAKLLEEDSEESRNSRQKR) are excised as a propeptide. The tract at residues 61-83 (EEDSEESRNSRQKRRIGEGVPCD) is disordered. 2 disulfides stabilise this stretch: Cys-82-Cys-95 and Cys-89-Cys-110.

This sequence belongs to the neurotoxin 14 (magi-1) family. 01 (HNTX-16) subfamily. Expressed by the venom gland.

It localises to the secreted. Its function is as follows. Probable ion channel inhibitor. This is U11-theraphotoxin-Hhn1h from Cyriopagopus hainanus (Chinese bird spider).